A 173-amino-acid chain; its full sequence is Crossover junction endodeoxyribonuclease RuvC (173 aa).

Active-site residues include D8, E67, and D139. Residues D8, E67, and D139 each coordinate Mg(2+).

It belongs to the RuvC family. As to quaternary structure, homodimer which binds Holliday junction (HJ) DNA. The HJ becomes 2-fold symmetrical on binding to RuvC with unstacked arms; it has a different conformation from HJ DNA in complex with RuvA. In the full resolvosome a probable DNA-RuvA(4)-RuvB(12)-RuvC(2) complex forms which resolves the HJ. The cofactor is Mg(2+).

The protein resides in the cytoplasm. It catalyses the reaction Endonucleolytic cleavage at a junction such as a reciprocal single-stranded crossover between two homologous DNA duplexes (Holliday junction).. Its function is as follows. The RuvA-RuvB-RuvC complex processes Holliday junction (HJ) DNA during genetic recombination and DNA repair. Endonuclease that resolves HJ intermediates. Cleaves cruciform DNA by making single-stranded nicks across the HJ at symmetrical positions within the homologous arms, yielding a 5'-phosphate and a 3'-hydroxyl group; requires a central core of homology in the junction. The consensus cleavage sequence is 5'-(A/T)TT(C/G)-3'. Cleavage occurs on the 3'-side of the TT dinucleotide at the point of strand exchange. HJ branch migration catalyzed by RuvA-RuvB allows RuvC to scan DNA until it finds its consensus sequence, where it cleaves and resolves the cruciform DNA. In Klebsiella pneumoniae subsp. pneumoniae (strain ATCC 700721 / MGH 78578), this protein is Crossover junction endodeoxyribonuclease RuvC.